A 359-amino-acid polypeptide reads, in one-letter code: Pyruvate dehydrogenase E1 component subunit beta, mitochondrial (359 aa).

The N-terminal 30 residues, 1 to 30 (MAVVAGLVRGPLRQASGLLKRRFHRSAPAA), are a transit peptide targeting the mitochondrion. Tyr67 carries the post-translational modification Phosphotyrosine. Glu89 contributes to the thiamine diphosphate binding site. The K(+) site is built by Ile142, Ala190, Ile191, Asp193, and Asn195. The residue at position 354 (Lys354) is an N6-acetyllysine.

Heterotetramer of two PDHA1 and two PDHB subunits. The heterotetramer interacts with DLAT, and is part of the multimeric pyruvate dehydrogenase complex that contains multiple copies of pyruvate dehydrogenase (E1), dihydrolipoamide acetyltransferase (DLAT, E2) and lipoamide dehydrogenase (DLD, E3). These subunits are bound to an inner core composed of about 48 DLAT and 12 PDHX molecules. Interacts with DLAT. It depends on thiamine diphosphate as a cofactor.

The protein localises to the mitochondrion matrix. The enzyme catalyses N(6)-[(R)-lipoyl]-L-lysyl-[protein] + pyruvate + H(+) = N(6)-[(R)-S(8)-acetyldihydrolipoyl]-L-lysyl-[protein] + CO2. Its function is as follows. The pyruvate dehydrogenase complex catalyzes the overall conversion of pyruvate to acetyl-CoA and CO(2), and thereby links the glycolytic pathway to the tricarboxylic cycle. The chain is Pyruvate dehydrogenase E1 component subunit beta, mitochondrial (Pdhb) from Mus musculus (Mouse).